Here is a 106-residue protein sequence, read N- to C-terminus: Thioredoxin-2 (106 aa).

The Thioredoxin domain maps to 2–106 (VYQIKDKADL…RLEDVIKANI (105 aa)). Residues cysteine 32 and cysteine 35 each act as nucleophile in the active site. Cysteine 32 and cysteine 35 are disulfide-bonded.

This sequence belongs to the thioredoxin family.

Participates in various redox reactions through the reversible oxidation of its active center dithiol to a disulfide and catalyzes dithiol-disulfide exchange reactions. As a reducing substrate of peroxiredoxin 1, thioredoxin 2 is preferred over thioredoxin 1. The chain is Thioredoxin-2 from Drosophila yakuba (Fruit fly).